The chain runs to 36 residues: Glucagon-2 (36 aa).

This sequence belongs to the glucagon family.

Its subcellular location is the secreted. Glucagon plays a key role in glucose metabolism and homeostasis. Regulates blood glucose by increasing gluconeogenesis and decreasing glycolysis. The chain is Glucagon-2 from Huso dauricus (Kaluga sturgeon).